A 556-amino-acid chain; its full sequence is MQFDYIIIGAGSAGNVLATRLTEDPNTSVLLLEAGGPDYRFDFRTQMPAALAFPLQGKRYNWAYETEPEPFMNNRRMECGRGKGLGGSSLINGMCYIRGNALDLDNWAQEPGLENWSYLDCLPYYRKAETRDMGENDYHGGDGPVSVTTSKPGVNPLFEAMIEAGVQAGYPRTDDLNGYQQEGFGPMDRTVTPQGRRASTARGYLDQAKSRPNLTIRTHAMTDHIIFDGKRAVGVEWLEGDSTIPTRATANKEVLLCAGAIASPQILQRSGVGNAELLAEFDIPLVHELPGVGENLQDHLEMYLQYECKEPVSLYPALQWWNQPKIGAEWLFGGTGVGASNHFEAGGFIRSREEFAWPNIQYHFLPVAINYNGSNAVKEHGFQCHVGSMRSPSRGHVRIKSRDPHQHPAILFNYMSHEQDWQEFRDAIRITREIMHQPALDQYRGREISPGVECQTDEQLDEFVRNHAETAFHPCGTCKMGYDEMSVVDGEGRVHGLEGLRVVDASIMPQIITGNLNATTIMIGEKIADMIRGQEALPRSTAGYFVANGMPVRAKK.

4 to 33 (DYIIIGAGSAGNVLATRLTEDPNTSVLLLE) contacts FAD. Histidine 473 (proton acceptor) is an active-site residue.

This sequence belongs to the GMC oxidoreductase family. FAD serves as cofactor.

It carries out the reaction choline + A = betaine aldehyde + AH2. It catalyses the reaction betaine aldehyde + NAD(+) + H2O = glycine betaine + NADH + 2 H(+). It participates in amine and polyamine biosynthesis; betaine biosynthesis via choline pathway; betaine aldehyde from choline (cytochrome c reductase route): step 1/1. Functionally, involved in the biosynthesis of the osmoprotectant glycine betaine. Catalyzes the oxidation of choline to betaine aldehyde and betaine aldehyde to glycine betaine at the same rate. The chain is Oxygen-dependent choline dehydrogenase from Escherichia coli (strain K12 / DH10B).